Here is a 265-residue protein sequence, read N- to C-terminus: Insulin-like growth factor-binding protein 5 (265 aa).

Positions 1–21 are cleaved as a signal peptide; sequence MEMLLPMCLLLVSLCLGQCQA. An IGFBP N-terminal domain is found at 24–104; that stretch reads SFVHCEPCDD…LHGRGVCLNL (81 aa). Intrachain disulfides connect C28–C54, C31–C56, C39–C57, C46–C60, C68–C81, and C75–C101. Residues 111–121 are compositionally biased toward basic and acidic residues; sequence SKIDRESREED. Residues 111–137 are disordered; sequence SKIDRESREEDPTTSETEDIYQSKHRG. The region spanning 182–256 is the Thyroglobulin type-1 domain; sequence MGPCRRQVET…IDYVNGDLQC (75 aa). Disulfide bonds link C185–C212, C223–C234, and C236–C256.

Its subcellular location is the secreted. In terms of biological role, IGF-binding proteins prolong the half-life of the IGFs and have been shown to either inhibit or stimulate the growth promoting effects of the IGFs on cell culture. They alter the interaction of IGFs with their cell surface receptors. Promotes anterior neural development by stimulating insulin growth factor (IGF) signaling via IGF receptors. This chain is Insulin-like growth factor-binding protein 5, found in Xenopus laevis (African clawed frog).